The primary structure comprises 341 residues: Heme A synthase (341 aa).

A run of 8 helical transmembrane segments spans residues 7-27, 92-112, 118-138, 159-179, 190-210, 253-273, 280-300, and 302-322; these read VTVWLGVCCSMTLLMVVIGGI, LFGRALGAVFCLPIPYFAITK, MVAKLLMVALLGGMQGAMGWF, LFLTILLFSILWHSFLRCAGV, FFTAAAVVGLTVLQMVLGALV, FLHRLVAVLIVVCAAPLPFWL, LFLACVALQFLLGVATLVSVV, and IFLAAMHQVFGFVTLAAGVHM. His255 is a binding site for heme. Residue His308 coordinates heme.

This sequence belongs to the COX15/CtaA family. Type 2 subfamily. Interacts with CtaB. Requires heme b as cofactor.

The protein resides in the cell membrane. The catalysed reaction is Fe(II)-heme o + 2 A + H2O = Fe(II)-heme a + 2 AH2. Its pathway is porphyrin-containing compound metabolism; heme A biosynthesis; heme A from heme O: step 1/1. Functionally, catalyzes the conversion of heme O to heme A by two successive hydroxylations of the methyl group at C8. The first hydroxylation forms heme I, the second hydroxylation results in an unstable dihydroxymethyl group, which spontaneously dehydrates, resulting in the formyl group of heme A. In Anaplasma marginale (strain Florida), this protein is Heme A synthase.